The primary structure comprises 428 residues: Palmitoyltransferase ZDHHC23-B (428 aa).

At 1-82 (MSIMKKRSSR…RVPWISGARQ (82 aa)) the chain is on the cytoplasmic side. The chain crosses the membrane as a helical span at residues 83–99 (IDVSLIPPLILLPVFLH). At 100–105 (IAALHY) the chain is on the lumenal side. A helical transmembrane segment spans residues 106–125 (LLGIIMLTAMPITVLWYYFF). Residues 126-132 (THRKKGR) lie on the Cytoplasmic side of the membrane. A helical transmembrane segment spans residues 133–153 (TLFFLGLALFSLFYMFYLFLT). The Lumenal segment spans residues 154–160 (QVVPRGE). A helical membrane pass occupies residues 161-181 (VTELQLAVVTAGVALTVIFLM). The Cytoplasmic segment spans residues 182–294 (LTKRGPGLVR…SCVGLANHRT (113 aa)). The region spanning 250-300 (NWCAVCKVVRPQRAGHCRICGVCVLRLDHHCVWINSCVGLANHRTFLLTLL) is the DHHC domain. Catalysis depends on cysteine 280, which acts as the S-palmitoyl cysteine intermediate. Residues 295 to 315 (FLLTLLFFLLTSIYGISLVLA) form a helical membrane-spanning segment. Residues 316–350 (SVCPDQRVLTALFYCPDVYSQYSSALCFTCAWYSS) are Lumenal-facing. A helical membrane pass occupies residues 351–371 (IVTGGLLHLLLLQILNISLNV). Residues 372–428 (TEREARLALREKSAQRRLWGLIVHTGHYSRGFWSNWTEFLTMTEDTQPAGHKTEDLV) lie on the Cytoplasmic side of the membrane.

Belongs to the DHHC palmitoyltransferase family.

Its subcellular location is the golgi apparatus membrane. The protein localises to the golgi apparatus. It is found in the trans-Golgi network membrane. It catalyses the reaction L-cysteinyl-[protein] + hexadecanoyl-CoA = S-hexadecanoyl-L-cysteinyl-[protein] + CoA. Its function is as follows. Palmitoyltransferase that could catalyze the addition of palmitate onto various protein substrates and be involved in a variety of cellular processes. The polypeptide is Palmitoyltransferase ZDHHC23-B (Danio rerio (Zebrafish)).